Consider the following 115-residue polypeptide: Large ribosomal subunit protein bL20 (115 aa).

Belongs to the bacterial ribosomal protein bL20 family.

Binds directly to 23S ribosomal RNA and is necessary for the in vitro assembly process of the 50S ribosomal subunit. It is not involved in the protein synthesizing functions of that subunit. The polypeptide is Large ribosomal subunit protein bL20 (Prochlorococcus marinus (strain SARG / CCMP1375 / SS120)).